A 209-amino-acid polypeptide reads, in one-letter code: Protein-L-isoaspartate O-methyltransferase (209 aa).

S55 is an active-site residue.

It belongs to the methyltransferase superfamily. L-isoaspartyl/D-aspartyl protein methyltransferase family.

It localises to the cytoplasm. The catalysed reaction is [protein]-L-isoaspartate + S-adenosyl-L-methionine = [protein]-L-isoaspartate alpha-methyl ester + S-adenosyl-L-homocysteine. Catalyzes the methyl esterification of L-isoaspartyl residues in peptides and proteins that result from spontaneous decomposition of normal L-aspartyl and L-asparaginyl residues. It plays a role in the repair and/or degradation of damaged proteins. The chain is Protein-L-isoaspartate O-methyltransferase from Anaeromyxobacter dehalogenans (strain 2CP-1 / ATCC BAA-258).